A 503-amino-acid polypeptide reads, in one-letter code: Putative ribose/galactose/methyl galactoside import ATP-binding protein (503 aa).

2 ABC transporter domains span residues 7-244 (LEMI…VGRE) and 254-498 (VPIG…TGQL). An ATP-binding site is contributed by 39 to 46 (GENGAGKS).

Belongs to the ABC transporter superfamily. Carbohydrate importer 2 (CUT2) (TC 3.A.1.2) family.

Its subcellular location is the cell membrane. It catalyses the reaction D-ribose(out) + ATP + H2O = D-ribose(in) + ADP + phosphate + H(+). The catalysed reaction is D-galactose(out) + ATP + H2O = D-galactose(in) + ADP + phosphate + H(+). Its function is as follows. Part of an ABC transporter complex involved in carbohydrate import. Could be involved in ribose, galactose and/or methyl galactoside import. Responsible for energy coupling to the transport system. This Geobacillus kaustophilus (strain HTA426) protein is Putative ribose/galactose/methyl galactoside import ATP-binding protein.